Consider the following 589-residue polypeptide: MTNSTDRPVSVSSWRTYRRLVAFAKPYRLLLVAALIAALIEAAGTTGFLALMKPITDETFIYKNAEVSRWLPVQIILLFVVRGIAGYITDMAMGKSARSIARDLRIKVMAKYLRLPGSRFDSEPVPSMLIRLGSDSDQVAQAAVDAIKVMIQQSLQVIGALALMLWHSWQVTLTILVLAPVLAWVMDKVARRYRRISHSIQESGAHLLQAADQTLSSHQEVKIYGAQQTEMERYGALADRNLRLAMKVESTRGISTATVQMIGAIGLSALLFVAGAQALAGRLTAGDFVVLMTSMLTIIPGLKQLTNVQNMVQRGLASAERLFSVLDSPDEPDQGAVALTRAKGLIEFRDVTARYPGQVNPALADVSFIAQPGTVTAIVGRSGSGKSSLIKLIPRFYDAEAGQILLDGQPVQAYALADLRRQIALVGQQVMLFDGSIAENVAFGEMRSADASQLERAILGANAMEFVAQLPEGLQSHVGAKGGRLSGGQRQRLAIARAMLKDAPILILDEATAALDNESERLVQDALHKLMPDRTTLVIAHRLSTIEHADQVLVMDQGRIVERGTHHELLAQGGLYSHLHGMQFRERQA.

5 helical membrane passes run 29 to 49, 70 to 90, 157 to 177, 261 to 281, and 283 to 303; these read LLLVAALIAALIEAAGTTGFL, WLPVQIILLFVVRGIAGYITD, VIGALALMLWHSWQVTLTILV, MIGAIGLSALLFVAGAQALAG, and LTAGDFVVLMTSMLTIIPGLK. The ABC transmembrane type-1 domain maps to 32-314; it reads VAALIAALIE…LTNVQNMVQR (283 aa). Residues 346–582 form the ABC transporter domain; the sequence is IEFRDVTARY…GGLYSHLHGM (237 aa). 380–387 contributes to the ATP binding site; sequence GRSGSGKS.

Belongs to the ABC transporter superfamily. Lipid exporter (TC 3.A.1.106) family. Homodimer.

The protein localises to the cell inner membrane. The enzyme catalyses ATP + H2O + lipid A-core oligosaccharideSide 1 = ADP + phosphate + lipid A-core oligosaccharideSide 2.. Involved in lipopolysaccharide (LPS) biosynthesis. Translocates lipid A-core from the inner to the outer leaflet of the inner membrane. Transmembrane domains (TMD) form a pore in the inner membrane and the ATP-binding domain (NBD) is responsible for energy generation. This Xanthomonas oryzae pv. oryzae (strain MAFF 311018) protein is ATP-dependent lipid A-core flippase.